Reading from the N-terminus, the 218-residue chain is Large ribosomal subunit protein uL3 (218 aa).

The segment at 126–163 (HGFSRGPMTHGSKNHRQPGSIGAGTTPGRIYPGKRMSG) is disordered.

It belongs to the universal ribosomal protein uL3 family. In terms of assembly, part of the 50S ribosomal subunit. Forms a cluster with proteins L14 and L19.

Its function is as follows. One of the primary rRNA binding proteins, it binds directly near the 3'-end of the 23S rRNA, where it nucleates assembly of the 50S subunit. This is Large ribosomal subunit protein uL3 from Synechococcus sp. (strain CC9311).